Here is a 340-residue protein sequence, read N- to C-terminus: SH2 domain-containing adapter protein D (340 aa).

Disordered stretches follow at residues 1-77, 94-186, and 198-230; these read MAKW…PKHR, GGPG…QPWE, and VQFD…ERVD. The segment covering 98–108 has biased composition (acidic residues); it reads EELEADTEYLD. A compositionally biased stretch (basic and acidic residues) spans 171 to 186; the sequence is PQEDERPADEYDQPWE. In terms of domain architecture, SH2 spans 240-335; it reads WFHGPLNRAD…AEHLALLYPV (96 aa).

Tyrosine phosphorylated by ABL.

May function as an adapter protein. This Homo sapiens (Human) protein is SH2 domain-containing adapter protein D (SHD).